The chain runs to 180 residues: dCTP deaminase, dUMP-forming (180 aa).

DCTP contacts are provided by residues 100-105, D117, 125-127, Q146, Y160, and Q167; these read RSSLGR and TLE. The active-site Proton donor/acceptor is the E127.

Belongs to the dCTP deaminase family. Homotrimer.

It catalyses the reaction dCTP + 2 H2O = dUMP + NH4(+) + diphosphate. It functions in the pathway pyrimidine metabolism; dUMP biosynthesis; dUMP from dCTP: step 1/1. In terms of biological role, bifunctional enzyme that catalyzes both the deamination of dCTP to dUTP and the hydrolysis of dUTP to dUMP without releasing the toxic dUTP intermediate. This chain is dCTP deaminase, dUMP-forming, found in Persephonella marina (strain DSM 14350 / EX-H1).